The sequence spans 263 residues: Metaxin-2 (263 aa).

The residue at position 2 (S2) is an N-acetylserine.

Belongs to the metaxin family. As to quaternary structure, interacts with MTX1/metaxin-1. Associates with the mitochondrial contact site and cristae organizing system (MICOS) complex, composed of at least MICOS10/MIC10, CHCHD3/MIC19, CHCHD6/MIC25, APOOL/MIC27, IMMT/MIC60, APOO/MIC23/MIC26 and QIL1/MIC13. This complex was also known under the names MINOS or MitOS complex. The MICOS complex associates with mitochondrial outer membrane proteins SAMM50, MTX1 and MTX2 (together described as components of the mitochondrial outer membrane sorting assembly machinery (SAM) complex) and DNAJC11, mitochondrial inner membrane protein TMEM11 and with HSPA9. The MICOS and SAM complexes together with DNAJC11 are part of a large protein complex spanning both membranes termed the mitochondrial intermembrane space bridging (MIB) complex.

It localises to the mitochondrion outer membrane. The protein resides in the mitochondrion. Functionally, involved in transport of proteins into the mitochondrion. This Mus musculus (Mouse) protein is Metaxin-2 (Mtx2).